The primary structure comprises 318 residues: Retinol dehydrogenase 5 (318 aa).

A helical transmembrane segment spans residues 1–21 (MWLPLLLGALLWAVLWLLRDR). The Lumenal segment spans residues 22 to 288 (QSLPASNAFV…TRYSPGWDAK (267 aa)). Residue 32 to 56 (FITGCDSGFGRLLALQLDQRGFRVL) participates in NADP(+) binding. The N-linked (GlcNAc...) asparagine glycan is linked to Asn160. Ser163 lines the substrate pocket. Catalysis depends on Tyr175, which acts as the Proton acceptor. Residues 289–309 (LLWLPASYLPASLVDAVLTWV) form a helical membrane-spanning segment. The Cytoplasmic portion of the chain corresponds to 310-318 (LPKPAQAVY).

The protein belongs to the short-chain dehydrogenases/reductases (SDR) family. Homodimer. Widely expressed. In the eye, abundant in the retinal pigment epithelium.

It is found in the endoplasmic reticulum membrane. It catalyses the reaction 11-cis-retinol + NAD(+) = 11-cis-retinal + NADH + H(+). The catalysed reaction is 9-cis-retinol + NAD(+) = 9-cis-retinal + NADH + H(+). It carries out the reaction 13-cis-retinol + NAD(+) = 13-cis-retinal + NADH + H(+). The enzyme catalyses androsterone + NAD(+) = 5alpha-androstan-3,17-dione + NADH + H(+). It catalyses the reaction 5alpha-androstane-3alpha,17beta-diol + NAD(+) = 17beta-hydroxy-5alpha-androstan-3-one + NADH + H(+). Its pathway is cofactor metabolism; retinol metabolism. Inhibited by 9-cis-, 13-cis- and all-trans-retinoic acids, with the most potent inhibitor being 13-cis-retinoic acid. Weakly inhibited by oleic acid. Its function is as follows. Catalyzes the oxidation of cis-isomers of retinol, including 11-cis-, 9-cis-, and 13-cis-retinol in an NAD-dependent manner. Has no activity towards all-trans retinal. Plays a significant role in 11-cis retinol oxidation in the retinal pigment epithelium cells (RPE). Also recognizes steroids (androsterone, androstanediol) as its substrates. This Homo sapiens (Human) protein is Retinol dehydrogenase 5.